We begin with the raw amino-acid sequence, 202 residues long: Phosphoenolpyruvate guanylyltransferase (202 aa).

3 residues coordinate phosphoenolpyruvate: threonine 140, glycine 156, and serine 159.

The protein belongs to the CofC family.

The enzyme catalyses phosphoenolpyruvate + GTP + H(+) = enolpyruvoyl-2-diphospho-5'-guanosine + diphosphate. It functions in the pathway cofactor biosynthesis; coenzyme F420 biosynthesis. Its function is as follows. Guanylyltransferase that catalyzes the activation of phosphoenolpyruvate (PEP) as enolpyruvoyl-2-diphospho-5'-guanosine, via the condensation of PEP with GTP. It is involved in the biosynthesis of coenzyme F420, a hydride carrier cofactor. The sequence is that of Phosphoenolpyruvate guanylyltransferase from Chloroflexus aggregans (strain MD-66 / DSM 9485).